Reading from the N-terminus, the 421-residue chain is GTPase Obg (421 aa).

Residues 1–158 form the Obg domain; sequence MYFIDEAINE…FKIKTELKIL (158 aa). The 166-residue stretch at 159-324 folds into the OBG-type G domain; it reads ADVGLIGYPS…LKYKMLEMIK (166 aa). Residues 165-172, 190-194, 211-214, 278-281, and 305-307 each bind GTP; these read GYPSVGKS, FTTLK, DLPG, NKMD, and SLL. Positions 172 and 192 each coordinate Mg(2+). The region spanning 342–421 is the OCT domain; it reads TLEEEKPDFV…ICDRVFEFIT (80 aa).

It belongs to the TRAFAC class OBG-HflX-like GTPase superfamily. OBG GTPase family. As to quaternary structure, monomer. It depends on Mg(2+) as a cofactor.

Its subcellular location is the cytoplasm. In terms of biological role, an essential GTPase which binds GTP, GDP and possibly (p)ppGpp with moderate affinity, with high nucleotide exchange rates and a fairly low GTP hydrolysis rate. Plays a role in control of the cell cycle, stress response, ribosome biogenesis and in those bacteria that undergo differentiation, in morphogenesis control. This chain is GTPase Obg, found in Phytoplasma mali (strain AT).